A 420-amino-acid polypeptide reads, in one-letter code: L-rhamnose isomerase (420 aa).

The Mn(2+) site is built by His-264, Asp-296, and Asp-298.

It belongs to the rhamnose isomerase family. The cofactor is Mn(2+).

It is found in the cytoplasm. The catalysed reaction is L-rhamnopyranose = L-rhamnulose. It participates in carbohydrate degradation; L-rhamnose degradation; glycerone phosphate from L-rhamnose: step 1/3. In terms of biological role, catalyzes the interconversion of L-rhamnose and L-rhamnulose. The protein is L-rhamnose isomerase of Listeria innocua serovar 6a (strain ATCC BAA-680 / CLIP 11262).